Reading from the N-terminus, the 319-residue chain is tRNA(Ile)-lysidine synthase (319 aa).

32 to 37 is an ATP binding site; the sequence is SGGSDS.

This sequence belongs to the tRNA(Ile)-lysidine synthase family.

It localises to the cytoplasm. It carries out the reaction cytidine(34) in tRNA(Ile2) + L-lysine + ATP = lysidine(34) in tRNA(Ile2) + AMP + diphosphate + H(+). Functionally, ligates lysine onto the cytidine present at position 34 of the AUA codon-specific tRNA(Ile) that contains the anticodon CAU, in an ATP-dependent manner. Cytidine is converted to lysidine, thus changing the amino acid specificity of the tRNA from methionine to isoleucine. This chain is tRNA(Ile)-lysidine synthase, found in Chlamydia pneumoniae (Chlamydophila pneumoniae).